Reading from the N-terminus, the 209-residue chain is Kynurenine formamidase (209 aa).

Substrate is bound at residue W20. The Zn(2+) site is built by H50, H54, and D56. H60 acts as the Proton donor/acceptor in catalysis. 2 residues coordinate Zn(2+): H161 and E173.

This sequence belongs to the Cyclase 1 superfamily. KynB family. Homodimer. The cofactor is Zn(2+).

The enzyme catalyses N-formyl-L-kynurenine + H2O = L-kynurenine + formate + H(+). It participates in amino-acid degradation; L-tryptophan degradation via kynurenine pathway; L-kynurenine from L-tryptophan: step 2/2. Functionally, catalyzes the hydrolysis of N-formyl-L-kynurenine to L-kynurenine, the second step in the kynurenine pathway of tryptophan degradation. The protein is Kynurenine formamidase of Bacillus cereus (strain ATCC 10987 / NRS 248).